The primary structure comprises 37 residues: Cytochrome b6-f complex subunit 5 (37 aa).

Residues 5–25 form a helical membrane-spanning segment; the sequence is FLFGIVLGLIPITLAGLFVTA.

Belongs to the PetG family. The 4 large subunits of the cytochrome b6-f complex are cytochrome b6, subunit IV (17 kDa polypeptide, PetD), cytochrome f and the Rieske protein, while the 4 small subunits are PetG, PetL, PetM and PetN. The complex functions as a dimer.

Its subcellular location is the plastid. The protein localises to the chloroplast thylakoid membrane. Functionally, component of the cytochrome b6-f complex, which mediates electron transfer between photosystem II (PSII) and photosystem I (PSI), cyclic electron flow around PSI, and state transitions. PetG is required for either the stability or assembly of the cytochrome b6-f complex. The chain is Cytochrome b6-f complex subunit 5 from Solanum lycopersicum (Tomato).